Consider the following 561-residue polypeptide: Arginine--tRNA ligase (561 aa).

The short motif at 129-139 (ANPTGPLHIGH) is the 'HIGH' region element.

Belongs to the class-I aminoacyl-tRNA synthetase family. Monomer.

The protein resides in the cytoplasm. It carries out the reaction tRNA(Arg) + L-arginine + ATP = L-arginyl-tRNA(Arg) + AMP + diphosphate. The chain is Arginine--tRNA ligase from Geotalea uraniireducens (strain Rf4) (Geobacter uraniireducens).